Consider the following 647-residue polypeptide: Glutamyl-tRNA(Gln) amidotransferase subunit B, mitochondrial (647 aa).

The interval 87–106 (QAKALKKSGHKKKKSSDNQT) is disordered. Positions 90-100 (ALKKSGHKKKK) are enriched in basic residues.

The protein belongs to the GatB/GatE family. GatB subfamily. In terms of assembly, subunit of the heterotrimeric GatCAB amidotransferase (AdT) complex, composed of A, B and C subunits.

It is found in the mitochondrion. The enzyme catalyses L-glutamyl-tRNA(Gln) + L-glutamine + ATP + H2O = L-glutaminyl-tRNA(Gln) + L-glutamate + ADP + phosphate + H(+). Allows the formation of correctly charged Gln-tRNA(Gln) through the transamidation of misacylated Glu-tRNA(Gln) in the mitochondria. The reaction takes place in the presence of glutamine and ATP through an activated gamma-phospho-Glu-tRNA(Gln). The sequence is that of Glutamyl-tRNA(Gln) amidotransferase subunit B, mitochondrial from Neurospora crassa (strain ATCC 24698 / 74-OR23-1A / CBS 708.71 / DSM 1257 / FGSC 987).